Here is a 118-residue protein sequence, read N- to C-terminus: V-type proton ATPase subunit G 3 (118 aa).

Residues 1-34 (MTSQSQGIHQLLQAEKRAKDKLEEAKKRKGKRLK) form a disordered region. The stretch at 5–54 (SQGIHQLLQAEKRAKDKLEEAKKRKGKRLKQAKEEAMVEIDQYRMQRDKE) forms a coiled coil. A compositionally biased stretch (basic and acidic residues) spans 14 to 26 (AEKRAKDKLEEAK).

Belongs to the V-ATPase G subunit family. As to quaternary structure, V-ATPase is a heteromultimeric enzyme made up of two complexes: the ATP-hydrolytic V1 complex and the proton translocation V0 complex. The V1 complex consists of three catalytic AB heterodimers that form a heterohexamer, three peripheral stalks each consisting of EG heterodimers, one central rotor including subunits D and F, and the regulatory subunits C and H. The proton translocation complex V0 consists of the proton transport subunit a, a ring of proteolipid subunits c9c'', rotary subunit d, subunits e and f, and the accessory subunits ATP6AP1/Ac45 and ATP6AP2/PRR. As to expression, kidney.

Its function is as follows. Subunit of the V1 complex of vacuolar(H+)-ATPase (V-ATPase), a multisubunit enzyme composed of a peripheral complex (V1) that hydrolyzes ATP and a membrane integral complex (V0) that translocates protons. V-ATPase is responsible for acidifying and maintaining the pH of intracellular compartments and in some cell types, is targeted to the plasma membrane, where it is responsible for acidifying the extracellular environment. The protein is V-type proton ATPase subunit G 3 (ATP6V1G3) of Homo sapiens (Human).